Consider the following 644-residue polypeptide: Type III restriction-modification enzyme EcoP15I Mod subunit (644 aa).

The segment at 123–126 (DPPY) is binding of S-adenosyl methionine.

It belongs to the N(4)/N(6)-methyltransferase family. In terms of assembly, forms a homodimer capable of methylating the target sequence in the absence of Res. A heterotetramer with stoichiometry Res(2)Mod(2). A heterotrimer with stoichiometry Res(1)Mod(2).

The enzyme catalyses a 2'-deoxyadenosine in DNA + S-adenosyl-L-methionine = an N(6)-methyl-2'-deoxyadenosine in DNA + S-adenosyl-L-homocysteine + H(+). Functionally, a beta subtype methylase that binds the system-specific DNA recognition site 5'-CAGCAG-3' and methylates A-5 (of only 1 strand as the other does not have an A residue). DNA restriction requires both the Res and Mod subunits. The A-5 nucleotide flips into the catalytic pocket of one Mod subunit for modification, while the other Mod subunit makes most of the DNA sequence-specific contacts. In Escherichia coli, this protein is Type III restriction-modification enzyme EcoP15I Mod subunit.